The sequence spans 249 residues: MTHQPQQSPQFFLTAPSPCPYLEGQMERKVFTHLVGDKANEINDLLTQGGFRRSQNIAYRPACELCRACISVRILAGEFKMTRNMRRVWTQNNDLIGRVHKAQPSTEQYALFRDYLDARHRSGGMSDMTVLDYAMMIEDTHVNTQIIEYRKRGPESFISAKGDGELIAVALTDVMADGLSMVYSFFSPHMHDRSLGTYMILDHIQRAHAAGLPHVYLGYWVEGSRKMQYKIRFTPQEHLGPRGWQRFEG.

This sequence belongs to the R-transferase family. Bpt subfamily.

The protein localises to the cytoplasm. It carries out the reaction N-terminal L-glutamyl-[protein] + L-leucyl-tRNA(Leu) = N-terminal L-leucyl-L-glutamyl-[protein] + tRNA(Leu) + H(+). The catalysed reaction is N-terminal L-aspartyl-[protein] + L-leucyl-tRNA(Leu) = N-terminal L-leucyl-L-aspartyl-[protein] + tRNA(Leu) + H(+). Its function is as follows. Functions in the N-end rule pathway of protein degradation where it conjugates Leu from its aminoacyl-tRNA to the N-termini of proteins containing an N-terminal aspartate or glutamate. This chain is Aspartate/glutamate leucyltransferase, found in Brucella anthropi (strain ATCC 49188 / DSM 6882 / CCUG 24695 / JCM 21032 / LMG 3331 / NBRC 15819 / NCTC 12168 / Alc 37) (Ochrobactrum anthropi).